The sequence spans 224 residues: Transcriptional regulatory protein TctD (224 aa).

The 115-residue stretch at 2-116 (RLLLAEDNRE…ELDARLRALL (115 aa)) folds into the Response regulatory domain. Residue D51 is modified to 4-aspartylphosphate. The ompR/PhoB-type DNA-binding region spans 121–219 (GQVHEVQQLG…LRGLGYVLER (99 aa)).

Transcriptional activator of the tctI tricarboxylate transport system operon. The polypeptide is Transcriptional regulatory protein TctD (tctD) (Salmonella typhimurium (strain SL1344)).